We begin with the raw amino-acid sequence, 197 residues long: MPIGVPKVPFRSPGEEDASWVDVYNRLYRERLLFLGQEVDSEISNQLIGLMVYLSIENDTKDLYLFINSPGGWVIPGVAIYDTMQFVRPDVQTICMGLAASMGSFILAGGEITKRLAFPHARVMIHQPASSFYEAQTGEFILEAEELLKLRETLTRVYVQRTDKPLWVVSEDMERDVFMSATEAQAYGIVDLVAVVE.

S101 acts as the Nucleophile in catalysis. H126 is an active-site residue.

This sequence belongs to the peptidase S14 family. Component of the chloroplastic Clp protease core complex.

It is found in the plastid. Its subcellular location is the chloroplast stroma. The enzyme catalyses Hydrolysis of proteins to small peptides in the presence of ATP and magnesium. alpha-casein is the usual test substrate. In the absence of ATP, only oligopeptides shorter than five residues are hydrolyzed (such as succinyl-Leu-Tyr-|-NHMec, and Leu-Tyr-Leu-|-Tyr-Trp, in which cleavage of the -Tyr-|-Leu- and -Tyr-|-Trp bonds also occurs).. In terms of biological role, cleaves peptides in various proteins in a process that requires ATP hydrolysis. Has a chymotrypsin-like activity. Plays a major role in the degradation of misfolded proteins. The protein is ATP-dependent Clp protease proteolytic subunit of Daucus carota (Wild carrot).